The primary structure comprises 1406 residues: Receptor-type tyrosine-protein phosphatase eta (1406 aa).

The N-terminal stretch at 1 to 24 is a signal peptide; it reads MRRLPLLPPCPLLLLLLLPAEVRC. The Extracellular portion of the chain corresponds to 25–1044; it reads TTACTDDCSL…LPQDPGVIAG (1020 aa). Residues N36, N52, N97, N103, N118, N124, N186, N192, N243, N275, N281, N296, N302, N331, N332, N364, N385, N391, N453, N459, N484, N500, N510, N547, N568, N630, N636, N651, N657, N719, N745, N750, N766, N776, N804, and N828 are each glycosylated (N-linked (GlcNAc...) asparagine). The tract at residues 39–72 is disordered; it reads EEMGTSSNDELSVNATSGNRRLSEDVSLPGRAMS. Residues 41–58 show a composition bias toward polar residues; that stretch reads MGTSSNDELSVNATSGNR. 10 Fibronectin type-III domains span residues 82 to 170, 171 to 259, 260 to 343, 346 to 437, 438 to 523, 524 to 614, 615 to 703, 704 to 793, 794 to 888, and 887 to 979; these read AVLD…TKPS, PVLD…TKPS, PVLD…SLNL, KPSP…TKPS, PVLD…SLYT, KPTP…TKPR, AVLH…TKPS, MVLN…VPSS, VNAF…TDPP, and PPVP…IVDV. N1010 is a glycosylation site (N-linked (GlcNAc...) asparagine). A helical transmembrane segment spans residues 1045-1065; the sequence is AVIGCLLAILAVVAIGGYIFW. At 1066–1406 the chain is on the cytoplasmic side; that stretch reads RRRRKDKRNT…AFGKANGYHA (341 aa). The region spanning 1110–1367 is the Tyrosine-protein phosphatase domain; the sequence is FAEEYEELKS…VFLNQCVMDI (258 aa). Residues D1274, 1308–1314, and Q1352 contribute to the substrate site; that span reads CSAGVGR. C1308 (phosphocysteine intermediate) is an active-site residue.

This sequence belongs to the protein-tyrosine phosphatase family. Receptor class 3 subfamily. Found on the apical surfaces of retinal Mueller cells, renal tubule cells and intestinal brush border cells.

It localises to the cell membrane. The protein resides in the cell projection. Its subcellular location is the ruffle membrane. It is found in the cell junction. The catalysed reaction is O-phospho-L-tyrosyl-[protein] + H2O = L-tyrosyl-[protein] + phosphate. In terms of biological role, tyrosine phosphatase which dephosphorylates or contributes to the dephosphorylation of several substrates. Plays a role in cell adhesion, migration, proliferation and differentiation. Has a role in megakaryocytes and platelet formation. May influence the potential of nonsensory supporting cells to either proliferate or differentiate into hair cells. This Gallus gallus (Chicken) protein is Receptor-type tyrosine-protein phosphatase eta (PTPRJ).